A 196-amino-acid polypeptide reads, in one-letter code: Thymidine kinase (196 aa).

Position 17–24 (17–24) interacts with ATP; it reads GPMFAGKT. The Proton acceptor role is filled by E92. Position 121 (F121) interacts with substrate. C146 and C149 together coordinate Zn(2+). 166–170 contributes to the substrate binding site; the sequence is LILAG. Positions 179 and 182 each coordinate Zn(2+).

It belongs to the thymidine kinase family.

It catalyses the reaction thymidine + ATP = dTMP + ADP + H(+). Phosphorylates thymidine. ASFV replicates in the cytoplasm of infected cells and contains genes encoding a number of enzymes needed for DNA synthesis, including thymidine kinase. Important for growth in swine macrophages in vitro and is a virus virulence factor in swine. In African swine fever virus (strain Badajoz 1971 Vero-adapted) (Ba71V), this protein is Thymidine kinase.